Here is an 81-residue protein sequence, read N- to C-terminus: MIIENQTKRLTQLIKVDVNRMIPLEKIHMWTKYIADEVFRSIPDGDHDLDVVITIDFSGKSGIRRNMKKMIMDSLEEELLR.

This is an uncharacterized protein from Caenorhabditis elegans.